The primary structure comprises 720 residues: Transcription factor bHLH155 (720 aa).

Over residues 522 to 534 (YPSSSSDQFQTSL) the composition is skewed to polar residues. The disordered stretch occupies residues 522–558 (YPSSSSDQFQTSLDIPKKNKKRAKPGESSRPRPRDRQ). The Nuclear localization signal signature appears at 540 to 547 (NKKRAKPG). Positions 544-593 (AKPGESSRPRPRDRQLIQDRIKELRELVPNGSKCSIDSLLERTIKHMLFL) constitute a bHLH domain. A compositionally biased stretch (basic and acidic residues) spans 545–558 (KPGESSRPRPRDRQ).

The protein belongs to the bHLH protein family. LHW subfamily. In terms of assembly, homodimer.

The protein localises to the nucleus. In terms of biological role, transcription factor that may regulate root development. This chain is Transcription factor bHLH155 (BHLH155), found in Arabidopsis thaliana (Mouse-ear cress).